The sequence spans 271 residues: Probable WRKY transcription factor 69 (271 aa).

Disordered stretches follow at residues 1–47 (MHRR…NVEK) and 130–166 (PSSS…TVTA). Over residues 9–18 (ESDDEEDETY) the composition is skewed to acidic residues. A DNA-binding region (WRKY) is located at residues 64–130 (GEVYPPSDSW…YACDHNHPFP (67 aa)).

This sequence belongs to the WRKY group II-e family.

The protein resides in the nucleus. Transcription factor. Interacts specifically with the W box (5'-(T)TGAC[CT]-3'), a frequently occurring elicitor-responsive cis-acting element. This Arabidopsis thaliana (Mouse-ear cress) protein is Probable WRKY transcription factor 69 (WRKY69).